Here is a 506-residue protein sequence, read N- to C-terminus: MKEYKVYLERARSRQQDFLYPLLFREYIYGLAYSHNLNRSIFLENVGYDNKYSLLIVKRLITRMYQQNHLIISANDSNKNRFWGYNKNLDSQIISEGFAIVVEIPFLRQLSSSLEEAEILQSYKNLRSIHSIFPFLEDKFTYLNYVSDIRIPYPIHLEILVQILRYWVKDAPFFHLLRLFLYNFCNWNSFITTRKWISTFSKSNPRLFLFLHNFYVCEYESIFVFLRTKSSHLRFKSFSVFFERIFFYAKREHLEKVFYKDFSYPLTFFKDLNIHYVRYQGKCILASKNAPFWMNKWKHYFIHLWQCFFDVWSQPRMININPLSEHSFQLLGYFLNVRLNRSVVRSQMLQNTFLIEIVIQNLDIIVPIIPLIRSLANAKFCNILGEPISKPVWADSSDFDIIDRFLRICRNLSHYYNGSSKKKSLYRIKYILRLSCIKTLACKHKSTVRAFLKRSGSEELLQEFFTEEEEILSLIFPRDSSTLQRLHRNRIWYLDILFSNDLVHDE.

It belongs to the intron maturase 2 family. MatK subfamily.

It is found in the plastid. The protein resides in the chloroplast. Usually encoded in the trnK tRNA gene intron. Probably assists in splicing its own and other chloroplast group II introns. This is Maturase K from Lathyrus sativus (White vetchling).